Consider the following 223-residue polypeptide: Germin-like protein 1-3 (223 aa).

A signal peptide spans 1–22 (MAKLILATFAVVFMALAATSLA). Cys32 and Cys50 are disulfide-bonded. An N-linked (GlcNAc...) asparagine glycan is attached at Asn55. The Cupin type-1 domain maps to 64-212 (DGLMKAGNTG…AFQVDGGMVE (149 aa)). Positions 112, 114, 119, and 158 each coordinate Mn(2+).

It belongs to the germin family. As to quaternary structure, oligomer (believed to be a pentamer but probably hexamer).

It is found in the secreted. The protein resides in the extracellular space. Its subcellular location is the apoplast. May play a role in plant defense. Probably has no oxalate oxidase activity even if the active site is conserved. In Oryza sativa subsp. japonica (Rice), this protein is Germin-like protein 1-3 (GER8).